A 279-amino-acid polypeptide reads, in one-letter code: uncharacterized protein (279 aa).

Residues 233-279 (NDHQLHDSPLCSDVSDSTSNNNYDESLNFSNDNNNSSFNDFDDDNFI) are disordered. Positions 246-259 (VSDSTSNNNYDESL) are enriched in polar residues. The span at 260–271 (NFSNDNNNSSFN) shows a compositional bias: low complexity.

This is an uncharacterized protein from Buchnera aphidicola subsp. Baizongia pistaciae (strain Bp).